We begin with the raw amino-acid sequence, 545 residues long: Chaperonin GroEL (545 aa).

Residues 30–33 (TLGP), Lys-51, 87–91 (DGTTT), Gly-415, and Asp-495 contribute to the ATP site.

The protein belongs to the chaperonin (HSP60) family. Forms a cylinder of 14 subunits composed of two heptameric rings stacked back-to-back. Interacts with the co-chaperonin GroES.

The protein localises to the cytoplasm. It carries out the reaction ATP + H2O + a folded polypeptide = ADP + phosphate + an unfolded polypeptide.. Its function is as follows. Together with its co-chaperonin GroES, plays an essential role in assisting protein folding. The GroEL-GroES system forms a nano-cage that allows encapsulation of the non-native substrate proteins and provides a physical environment optimized to promote and accelerate protein folding. In Shewanella sp. (strain MR-7), this protein is Chaperonin GroEL.